The chain runs to 319 residues: ATP-dependent 6-phosphofructokinase (319 aa).

Gly-11 lines the ATP pocket. Position 21 to 25 (Arg-21 to Arg-25) interacts with ADP. Residues Arg-72–Cys-73 and Gly-102–Ser-105 contribute to the ATP site. Asp-103 provides a ligand contact to Mg(2+). Thr-125 to Asp-127 contacts substrate. Asp-127 serves as the catalytic Proton acceptor. Arg-154 is an ADP binding site. Residues Arg-162 and Met-169–Arg-171 contribute to the substrate site. ADP contacts are provided by residues Gly-185 to Glu-187, Arg-211, and Lys-213 to His-215. Residues Glu-222, Arg-243, and His-249–Arg-252 each bind substrate.

This sequence belongs to the phosphofructokinase type A (PFKA) family. ATP-dependent PFK group I subfamily. Prokaryotic clade 'B1' sub-subfamily. Homotetramer. It depends on Mg(2+) as a cofactor.

It localises to the cytoplasm. It catalyses the reaction beta-D-fructose 6-phosphate + ATP = beta-D-fructose 1,6-bisphosphate + ADP + H(+). It participates in carbohydrate degradation; glycolysis; D-glyceraldehyde 3-phosphate and glycerone phosphate from D-glucose: step 3/4. Its activity is regulated as follows. Allosterically activated by ADP and other diphosphonucleosides, and allosterically inhibited by phosphoenolpyruvate. Functionally, catalyzes the phosphorylation of D-fructose 6-phosphate to fructose 1,6-bisphosphate by ATP, the first committing step of glycolysis. The protein is ATP-dependent 6-phosphofructokinase of Anoxybacillus flavithermus (strain DSM 21510 / WK1).